The primary structure comprises 301 residues: MKNKAGFVALIGKPNAGKSTLLNTLLNAHLALVSHKANATRKLMKCIVPFKDKEGYESQIIFLDTPGLHHQEKLLNQCMLSQALKAMGDAELCVFLASVHDDLKGYEEFLSLCQKPHILALSKIDMATHKQVLQKLQEYQQYNSQFLALVPLSAKKSQNLNALLECISKHLIPSAWLFEKDLMSDEKMRDIYKEIIRESLFDFLSDEIPYESDVVIDKFIEEERIDKVYARIIVEKESQKKIVIGKNGVNIKRIGTSARLKMQEVGEKKVFLNLQVIAQKSWSKEEKSLQKLGYTHQRNRD.

The 170-residue stretch at 4 to 173 folds into the Era-type G domain; sequence KAGFVALIGK…LECISKHLIP (170 aa). A G1 region spans residues 12–19; that stretch reads GKPNAGKS. 12-19 serves as a coordination point for GTP; the sequence is GKPNAGKS. Residues 38–42 are G2; sequence NATRK. The segment at 64-67 is G3; that stretch reads DTPG. GTP contacts are provided by residues 64 to 68 and 122 to 125; these read DTPGL and SKID. The segment at 122–125 is G4; sequence SKID. Residues 152–154 form a G5 region; the sequence is LSA. The KH type-2 domain maps to 204–280; it reads LSDEIPYESD…FLNLQVIAQK (77 aa).

Belongs to the TRAFAC class TrmE-Era-EngA-EngB-Septin-like GTPase superfamily. Era GTPase family. Monomer.

The protein resides in the cytoplasm. Its subcellular location is the cell inner membrane. In terms of biological role, an essential GTPase that binds both GDP and GTP, with rapid nucleotide exchange. Plays a role in 16S rRNA processing and 30S ribosomal subunit biogenesis and possibly also in cell cycle regulation and energy metabolism. The sequence is that of GTPase Era from Helicobacter pylori (strain HPAG1).